The primary structure comprises 293 residues: Formamidopyrimidine-DNA glycosylase (293 aa).

The active-site Schiff-base intermediate with DNA is the P2. Residue E3 is the Proton donor of the active site. The active-site Proton donor; for beta-elimination activity is the K58. Residues H104, R127, and R170 each contribute to the DNA site. The FPG-type zinc finger occupies 257-293; the sequence is SVYGREGKPCRNPACGGTVERVVQSGRSTFFCASCQT. R283 acts as the Proton donor; for delta-elimination activity in catalysis.

The protein belongs to the FPG family. As to quaternary structure, monomer. The cofactor is Zn(2+).

The catalysed reaction is Hydrolysis of DNA containing ring-opened 7-methylguanine residues, releasing 2,6-diamino-4-hydroxy-5-(N-methyl)formamidopyrimidine.. The enzyme catalyses 2'-deoxyribonucleotide-(2'-deoxyribose 5'-phosphate)-2'-deoxyribonucleotide-DNA = a 3'-end 2'-deoxyribonucleotide-(2,3-dehydro-2,3-deoxyribose 5'-phosphate)-DNA + a 5'-end 5'-phospho-2'-deoxyribonucleoside-DNA + H(+). In terms of biological role, involved in base excision repair of DNA damaged by oxidation or by mutagenic agents. Acts as a DNA glycosylase that recognizes and removes damaged bases. Has a preference for oxidized purines, such as 7,8-dihydro-8-oxoguanine (8-oxoG). Has AP (apurinic/apyrimidinic) lyase activity and introduces nicks in the DNA strand. Cleaves the DNA backbone by beta-delta elimination to generate a single-strand break at the site of the removed base with both 3'- and 5'-phosphates. The polypeptide is Formamidopyrimidine-DNA glycosylase (Brucella canis (strain ATCC 23365 / NCTC 10854 / RM-666)).